Consider the following 407-residue polypeptide: Arginine biosynthesis bifunctional protein ArgJ (407 aa).

Substrate-binding residues include T154, K180, T191, E278, N402, and S407. Residue T191 is the Nucleophile of the active site.

Belongs to the ArgJ family. Heterotetramer of two alpha and two beta chains.

It localises to the cytoplasm. It carries out the reaction N(2)-acetyl-L-ornithine + L-glutamate = N-acetyl-L-glutamate + L-ornithine. It catalyses the reaction L-glutamate + acetyl-CoA = N-acetyl-L-glutamate + CoA + H(+). The protein operates within amino-acid biosynthesis; L-arginine biosynthesis; L-ornithine and N-acetyl-L-glutamate from L-glutamate and N(2)-acetyl-L-ornithine (cyclic): step 1/1. It functions in the pathway amino-acid biosynthesis; L-arginine biosynthesis; N(2)-acetyl-L-ornithine from L-glutamate: step 1/4. Catalyzes two activities which are involved in the cyclic version of arginine biosynthesis: the synthesis of N-acetylglutamate from glutamate and acetyl-CoA as the acetyl donor, and of ornithine by transacetylation between N(2)-acetylornithine and glutamate. The chain is Arginine biosynthesis bifunctional protein ArgJ from Psychrobacter arcticus (strain DSM 17307 / VKM B-2377 / 273-4).